A 610-amino-acid polypeptide reads, in one-letter code: E3 ubiquitin-protein ligase hrd-1 (610 aa).

Residues 1–23 (MRVSAGLMIGGSCVATAATILNA) form the signal peptide. At 24–41 (FLINKQFYPSIVYLSKSN) the chain is on the lumenal side. Residues 42-62 (ASMAVIYVQGIVLVYLMFQLL) traverse the membrane as a helical segment. The Cytoplasmic portion of the chain corresponds to 63–99 (KSILFGDLRAAEAEHLSERTWHAVLETCLAFTVFRDD). Residues 100–120 (FSAIFVMQFIGLLFIKCFHWL) form a helical membrane-spanning segment. Residues 121-144 (ADDRVDMMERSPVITLRFHLRMMT) are Lumenal-facing. The chain crosses the membrane as a helical span at residues 145 to 165 (VLAALGFADSYFVSSAYFTTI). Residues 166-170 (TRGAS) are Cytoplasmic-facing. A helical transmembrane segment spans residues 171 to 191 (AQIVFGFEYAILLALVLHVTI). Topologically, residues 192–215 (KYLLHMHDLRNPQSWDNKAVYLLY) are lumenal. The chain crosses the membrane as a helical span at residues 216 to 236 (AELFINLIRCLLYGFFAVVML). At 237-610 (RVHTFPLFSV…ARLLGENANQ (374 aa)) the chain is on the cytoplasmic side. An RING-type; atypical zinc finger spans residues 292–333 (CIICREEMTVDASPKRLPCSHVFHAHCLRSWFQRQQTCPTCR). Disordered stretches follow at residues 386 to 408 (QPAG…GPFP), 452 to 480 (VNTT…LRRM), and 521 to 610 (RPVV…NANQ). Polar residues predominate over residues 452-474 (VNTTQGTSSETPPVNPSYSQLST). Residues 560 to 589 (TESPSTSSTAPSTSSPVTASSTPTTSSTRT) show a composition bias toward low complexity.

Belongs to the HRD1 family. Homodimer.

It is found in the endoplasmic reticulum membrane. The enzyme catalyses S-ubiquitinyl-[E2 ubiquitin-conjugating enzyme]-L-cysteine + [acceptor protein]-L-lysine = [E2 ubiquitin-conjugating enzyme]-L-cysteine + N(6)-ubiquitinyl-[acceptor protein]-L-lysine.. It participates in protein modification; protein ubiquitination. In terms of biological role, acts as an E3 ubiquitin-protein ligase which accepts ubiquitin specifically from endoplasmic reticulum-associated ubc-7 E2 ligase and transfers it to substrates, promoting their degradation. Component of the endoplasmic reticulum quality control (ERQC) system, which is also called the ER-associated degradation (ERAD) system, involved in ubiquitin-dependent degradation of misfolded endoplasmic reticulum proteins. Also promotes the degradation of normal but naturally short-lived proteins. Protects cells from ER stress-induced apoptosis. Thought to play a role together with hsp-3 in developmental growth and function of intestinal cells and to play a role together with hsp-4 in gonad formation. Plays a key role in the degradation of the potassium channel slo-1, perhaps acting directly, in targeting slo-1 to the ER-associated degradation pathway (ERAD), and also indirectly, via activation of the transcription factor skn-1, which mediates proteasomal homeostasis. This Caenorhabditis elegans protein is E3 ubiquitin-protein ligase hrd-1 (sel-11).